Consider the following 676-residue polypeptide: tRNA uridine 5-carboxymethylaminomethyl modification enzyme MnmG (676 aa).

15 to 20 (GAGHAG) contributes to the FAD binding site. 316–330 (GPRYCPSIEDKIVRF) contacts NAD(+).

Belongs to the MnmG family. Homodimer. Heterotetramer of two MnmE and two MnmG subunits. FAD serves as cofactor.

It localises to the cytoplasm. NAD-binding protein involved in the addition of a carboxymethylaminomethyl (cmnm) group at the wobble position (U34) of certain tRNAs, forming tRNA-cmnm(5)s(2)U34. The chain is tRNA uridine 5-carboxymethylaminomethyl modification enzyme MnmG from Roseiflexus castenholzii (strain DSM 13941 / HLO8).